A 1390-amino-acid chain; its full sequence is DNA-directed RNA polymerase subunit beta (1390 aa).

It belongs to the RNA polymerase beta chain family. The RNAP catalytic core consists of 2 alpha, 1 beta, 1 beta' and 1 omega subunit. When a sigma factor is associated with the core the holoenzyme is formed, which can initiate transcription.

It catalyses the reaction RNA(n) + a ribonucleoside 5'-triphosphate = RNA(n+1) + diphosphate. In terms of biological role, DNA-dependent RNA polymerase catalyzes the transcription of DNA into RNA using the four ribonucleoside triphosphates as substrates. The chain is DNA-directed RNA polymerase subunit beta from Chromobacterium violaceum (strain ATCC 12472 / DSM 30191 / JCM 1249 / CCUG 213 / NBRC 12614 / NCIMB 9131 / NCTC 9757 / MK).